A 547-amino-acid polypeptide reads, in one-letter code: Chaperonin GroEL (547 aa).

ATP is bound by residues 30–33, K51, 87–91, G415, and D496; these read TLGP and DGTTT. A disordered region spans residues 528 to 547; that stretch reads KGGGAPAGGGMPGGMGDMDF.

It belongs to the chaperonin (HSP60) family. Forms a cylinder of 14 subunits composed of two heptameric rings stacked back-to-back. Interacts with the co-chaperonin GroES.

It localises to the cytoplasm. The catalysed reaction is ATP + H2O + a folded polypeptide = ADP + phosphate + an unfolded polypeptide.. Functionally, together with its co-chaperonin GroES, plays an essential role in assisting protein folding. The GroEL-GroES system forms a nano-cage that allows encapsulation of the non-native substrate proteins and provides a physical environment optimized to promote and accelerate protein folding. The protein is Chaperonin GroEL of Caulobacter vibrioides (strain ATCC 19089 / CIP 103742 / CB 15) (Caulobacter crescentus).